We begin with the raw amino-acid sequence, 304 residues long: tRNA dimethylallyltransferase (304 aa).

8–15 lines the ATP pocket; sequence GPTASGKS. A substrate-binding site is contributed by 10-15; sequence TASGKS. Residues 33 to 36 are interaction with substrate tRNA; it reads DSRQ.

The protein belongs to the IPP transferase family. In terms of assembly, monomer. Requires Mg(2+) as cofactor.

The enzyme catalyses adenosine(37) in tRNA + dimethylallyl diphosphate = N(6)-dimethylallyladenosine(37) in tRNA + diphosphate. Functionally, catalyzes the transfer of a dimethylallyl group onto the adenine at position 37 in tRNAs that read codons beginning with uridine, leading to the formation of N6-(dimethylallyl)adenosine (i(6)A). This chain is tRNA dimethylallyltransferase, found in Chlorobium luteolum (strain DSM 273 / BCRC 81028 / 2530) (Pelodictyon luteolum).